The sequence spans 1027 residues: Transient-receptor-potential-like protein (1027 aa).

Residues 1 to 22 (MTKEGMLSAAGRRFSRCAPSPR) are disordered. 3 ANK repeats span residues 85–115 (MGRT…RIGN), 117–141 (LLCA…ITRE), and 163–192 (SDIS…SIEK). Transmembrane regions (helical) follow at residues 355–375 (FFLY…YILM), 391–411 (FFYY…ATFE), 473–493 (FLMI…YYIF), 516–536 (VAEA…IYLF), 559–579 (FCFI…QLYW), and 640–660 (MFIM…IAMM). 2 disordered regions span residues 825–929 (KRDI…TYTS) and 1008–1027 (ENVK…NVEK). The span at 855–874 (EESEEDDKSDETSSTDEEAD) shows a compositional bias: acidic residues. Basic and acidic residues predominate over residues 910 to 923 (RASEADSKLPDRPL). A compositionally biased stretch (polar residues) spans 1008–1017 (ENVKSPSPAS).

Belongs to the transient receptor (TC 1.A.4) family. STrpC subfamily.

It localises to the membrane. In terms of biological role, could mediate calcium entry and form a calcium permeant channel. In Caenorhabditis elegans, this protein is Transient-receptor-potential-like protein (trp-1).